We begin with the raw amino-acid sequence, 199 residues long: Holliday junction branch migration complex subunit RuvA (199 aa).

The domain I stretch occupies residues 1-64 (MIALLTGKLA…EDAINLYGFR (64 aa)). The interval 65-143 (TMEEKEMFQL…KLGHGPLQQD (79 aa)) is domain II. The flexible linker stretch occupies residues 144 to 148 (VAPAD). A domain III region spans residues 149 to 199 (AHNDMRDDVVSALVNLGYKEAVVQKTVDEIGVAADATVESLLKQALKKLMK).

The protein belongs to the RuvA family. In terms of assembly, homotetramer. Forms an RuvA(8)-RuvB(12)-Holliday junction (HJ) complex. HJ DNA is sandwiched between 2 RuvA tetramers; dsDNA enters through RuvA and exits via RuvB. An RuvB hexamer assembles on each DNA strand where it exits the tetramer. Each RuvB hexamer is contacted by two RuvA subunits (via domain III) on 2 adjacent RuvB subunits; this complex drives branch migration. In the full resolvosome a probable DNA-RuvA(4)-RuvB(12)-RuvC(2) complex forms which resolves the HJ.

It localises to the cytoplasm. The RuvA-RuvB-RuvC complex processes Holliday junction (HJ) DNA during genetic recombination and DNA repair, while the RuvA-RuvB complex plays an important role in the rescue of blocked DNA replication forks via replication fork reversal (RFR). RuvA specifically binds to HJ cruciform DNA, conferring on it an open structure. The RuvB hexamer acts as an ATP-dependent pump, pulling dsDNA into and through the RuvAB complex. HJ branch migration allows RuvC to scan DNA until it finds its consensus sequence, where it cleaves and resolves the cruciform DNA. The sequence is that of Holliday junction branch migration complex subunit RuvA from Geotalea daltonii (strain DSM 22248 / JCM 15807 / FRC-32) (Geobacter daltonii).